Reading from the N-terminus, the 694-residue chain is Long-chain-fatty-acid--CoA ligase 3 (694 aa).

The interval 1–25 is disordered; that stretch reads MSEQHSVAVGKAANEHETAPRRNVR. Residue serine 2 is modified to N-acetylserine. 269–280 is a binding site for ATP; it reads YTSGSISAPKGV. Positions 527-576 match the FACS motif; that stretch reads DGWFRTGDIVEWTPKGQLKIIDRRKNLVKTLNGEYIALEKLESVYRSNSY.

Belongs to the ATP-dependent AMP-binding enzyme family. As to quaternary structure, interacts with FRK1. It depends on Mg(2+) as a cofactor.

Its subcellular location is the cell membrane. It carries out the reaction a long-chain fatty acid + ATP + CoA = a long-chain fatty acyl-CoA + AMP + diphosphate. It catalyses the reaction (9Z)-octadecenoate + ATP + CoA = (9Z)-octadecenoyl-CoA + AMP + diphosphate. The enzyme catalyses hexadecanoate + ATP + CoA = hexadecanoyl-CoA + AMP + diphosphate. The catalysed reaction is (9Z)-hexadecenoate + ATP + CoA = (9Z)-hexadecenoyl-CoA + AMP + diphosphate. It carries out the reaction (9Z)-tetradecenoate + ATP + CoA = (9Z)-tetradecenoyl-CoA + AMP + diphosphate. It catalyses the reaction (9Z,12Z)-octadecadienoate + ATP + CoA = (9Z,12Z)-octadecadienoyl-CoA + AMP + diphosphate. Functionally, activates endogenous long-chain fatty acids (LCFA) by esterification of the fatty acids into metabolically active CoA-thioesters for subsequent degradation or incorporation into phospholipids. Acts preferentially on C16 and C18 fatty acids with a cis-double bond at C-9-C-10. This is Long-chain-fatty-acid--CoA ligase 3 (FAA3) from Saccharomyces cerevisiae (strain ATCC 204508 / S288c) (Baker's yeast).